Here is a 67-residue protein sequence, read N- to C-terminus: Brevinin-1CDYc (67 aa).

The first 22 residues, 1–22, serve as a signal peptide directing secretion; it reads MFTLKKSLLLIFFLGTINLSLC. Positions 23 to 45 are excised as a propeptide; sequence EEERNADEEERRDDPEERDVEVE. An intrachain disulfide couples Cys61 to Cys67.

It belongs to the frog skin active peptide (FSAP) family. Brevinin subfamily. In terms of tissue distribution, expressed by the skin glands.

Its subcellular location is the secreted. In terms of biological role, antimicrobial peptide. The polypeptide is Brevinin-1CDYc (Rana huanrensis (Huanren frog)).